A 179-amino-acid chain; its full sequence is MSRIGKLPVAVPSGVDVAIDGARVTVKGPKGTLSHTVAAPITVEKGDGVLDVKRPDDERESKALHGLTRTLVNNMVVGVTEGYEKKLEIVGVGYRVLSKGPTQLEFQLGYSHPITFNAPEGITFAVEGPTRLGVQGIDKQLVGEVAANIRKLRKPEPYKGKGVRYAGEHIRRKVGKAGK.

Belongs to the universal ribosomal protein uL6 family. In terms of assembly, part of the 50S ribosomal subunit.

Its function is as follows. This protein binds to the 23S rRNA, and is important in its secondary structure. It is located near the subunit interface in the base of the L7/L12 stalk, and near the tRNA binding site of the peptidyltransferase center. This chain is Large ribosomal subunit protein uL6, found in Nocardioides sp. (strain ATCC BAA-499 / JS614).